A 539-amino-acid polypeptide reads, in one-letter code: Protein pim1 (539 aa).

The disordered stretch occupies residues 1 to 53 (MTSNRSTRSSTKREEVSKNGVEKRELDESDVMKNGKKPVKRAKVSSLPKPVRV). The span at 11-33 (TKREEVSKNGVEKRELDESDVMK) shows a compositional bias: basic and acidic residues. Over residues 34–43 (NGKKPVKRAK) the composition is skewed to basic residues. 7 RCC1 repeats span residues 70–125 (RLNV…ALSH), 127–191 (GRVY…AITD), 192–243 (NGCC…ALTT), 244–296 (TGKV…AIDN), 298–353 (GRVY…ALLE), 354–417 (DGRV…AVTS), and 419–472 (GKVY…IAGI). The disordered stretch occupies residues 478–539 (EPVANGIKSE…SVLEPSSTTA (62 aa)). Residues 486–504 (SEPENEKKLKTEETSKTDD) are compositionally biased toward basic and acidic residues. Residues 514–525 (VTSNGEPSTATS) are compositionally biased toward polar residues.

As to quaternary structure, oligomer of dis3, pim1 and spi1. Interacts with ned1.

It localises to the nucleus. In terms of biological role, promotes the exchange of Ran(spi1)-bound GDP by GTP. Involved in the control of mitosis. Regulates a variety of nuclear events, including mitotic check-point, chromosome decondensation and mRNA processing/transport. In Schizosaccharomyces pombe (strain 972 / ATCC 24843) (Fission yeast), this protein is Protein pim1 (pim1).